The sequence spans 156 residues: Small ribosomal subunit protein uS7 (156 aa).

This sequence belongs to the universal ribosomal protein uS7 family. In terms of assembly, part of the 30S ribosomal subunit. Contacts proteins S9 and S11.

Its function is as follows. One of the primary rRNA binding proteins, it binds directly to 16S rRNA where it nucleates assembly of the head domain of the 30S subunit. Is located at the subunit interface close to the decoding center, probably blocks exit of the E-site tRNA. The chain is Small ribosomal subunit protein uS7 from Rippkaea orientalis (strain PCC 8801 / RF-1) (Cyanothece sp. (strain PCC 8801)).